The chain runs to 694 residues: Nuclear factor erythroid 2-related factor 3 (694 aa).

Residues 133–150 (ASSTGGAGASVDGGSQAV) show a composition bias toward low complexity. 2 disordered regions span residues 133-256 (ASST…LNGT) and 330-357 (DPTARTSQSQEPFLQLNSHTTNPEQTLP). Composition is skewed to basic and acidic residues over residues 193–217 (GVLREKHEAVDHSSQHEENEERVSA) and 231–254 (NKIAEKPDWEAEKTTESRNERHLN). A compositionally biased stretch (polar residues) spans 333–357 (ARTSQSQEPFLQLNSHTTNPEQTLP). The bZIP domain maps to 578 to 641 (LIRDIRRRGK…NIMKQKLHDL (64 aa)). The interval 580-599 (RDIRRRGKNKVAAQNCRKRK) is basic motif. Residues 606-620 (LEDDVCNLQAKKETL) form a leucine-zipper region.

It belongs to the bZIP family. CNC subfamily. In terms of assembly, heterodimer with MAFG, MAFK and other small MAF proteins that binds to the MAF recognition elements (MARE). In terms of tissue distribution, highly expressed in human placenta and also in B-cell and monocyte cell lines. Low expression in heart, brain, lung, skeletal muscle, kidney and pancreas.

The protein resides in the nucleus. Activates erythroid-specific, globin gene expression. The protein is Nuclear factor erythroid 2-related factor 3 (NFE2L3) of Homo sapiens (Human).